Reading from the N-terminus, the 217-residue chain is GRB2-related adapter protein (217 aa).

The SH3 1 domain occupies 1-58; that stretch reads MESVALYSFQATESDELAFNKGDTLKILNMEDDQNWYKAELRGVEGFIPKNYIRVKPH. Positions 60–154 constitute an SH2 domain; the sequence is WYSGRISRQL…QIFLRDEEPL (95 aa). The SH3 2 domain maps to 158-217; that stretch reads PGACFAQAQFDFSAQDPSQLSFRRGDIIEVLERPDPHWWRGRSCGRVGFFPRSYVQPVHL.

This sequence belongs to the GRB2/sem-5/DRK family. Associates through its SH2 domain with ligand-activated receptors for stem cell factor (KIT) and erythropoietin (EPOR). Also forms a stable complex with the Bcr-Abl oncoprotein. GRAP is associated with the Ras guanine nucleotide exchange factor SOS1, primarily through its N-terminal SH3 domain. Interacts with phosphorylated LAT upon TCR activation. Interacts with SHB.

It is found in the membrane. Its subcellular location is the synapse. In terms of biological role, couples signals from receptor and cytoplasmic tyrosine kinases to the Ras signaling pathway. Plays a role in the inner ear and in hearing. The polypeptide is GRB2-related adapter protein (Homo sapiens (Human)).